The sequence spans 499 residues: Low-affinity inorganic phosphate transporter PitB (499 aa).

Helical transmembrane passes span 5–25, 52–72, 94–114, 124–144, 155–175, 207–227, 233–253, 382–402, 430–450, and 473–493; these read FVGL…FVLF, LAVV…GLSV, LAMV…TWFF, LIGA…SSVM, IFSS…GLIF, PFWT…SHGA, GIGL…VVNM, APVW…MIGW, AAVS…THVL, and ILMA…GLYW.

Belongs to the inorganic phosphate transporter (PiT) (TC 2.A.20) family. Pit subfamily.

The protein resides in the cell inner membrane. It carries out the reaction phosphate(in) + H(+)(in) = phosphate(out) + H(+)(out). In terms of biological role, low-affinity inorganic phosphate transporter. This is Low-affinity inorganic phosphate transporter PitB from Escherichia coli (strain K12).